A 232-amino-acid chain; its full sequence is Large ribosomal subunit protein uL1 (232 aa).

This sequence belongs to the universal ribosomal protein uL1 family. In terms of assembly, part of the 50S ribosomal subunit.

Functionally, binds directly to 23S rRNA. The L1 stalk is quite mobile in the ribosome, and is involved in E site tRNA release. Its function is as follows. Protein L1 is also a translational repressor protein, it controls the translation of the L11 operon by binding to its mRNA. In Paraburkholderia phymatum (strain DSM 17167 / CIP 108236 / LMG 21445 / STM815) (Burkholderia phymatum), this protein is Large ribosomal subunit protein uL1.